An 86-amino-acid polypeptide reads, in one-letter code: Cell division topological specificity factor (86 aa).

It belongs to the MinE family.

Prevents the cell division inhibition by proteins MinC and MinD at internal division sites while permitting inhibition at polar sites. This ensures cell division at the proper site by restricting the formation of a division septum at the midpoint of the long axis of the cell. This Shewanella piezotolerans (strain WP3 / JCM 13877) protein is Cell division topological specificity factor.